We begin with the raw amino-acid sequence, 1383 residues long: MLRKLTVDQINDWFTIGKTVTNVELLGLPPAFPAEAPREEVQRSEEVPNEDPTAQAQVPVKATAPARPASTSGRSLSQRSSEMEYINKYRQLEEQELDIYGQDQPPSGPGLRSPLAKLSNVACIPETTYKYPDLPINRCKEEVISLIESNSVVIIHGATGSGKSTQLPQYVLDHYTQRSAFCNIVVTQPRKIGASSIARWISKERSWTLGGLVGYQVGLEKIATEDTRLIYMTTGVLLQKIVSAKSLMEFTHIFIDEVHERTEEMDFLLLVVRKLLRTNSRFVKVVLMSATINCKQFADYFAVPVQNKMNPAYVFEVEGKPHAIEEYYLNDLGHIYHSGLPYRLEEPVITKDVYEVAVSLIQMFDDLDMKESGNKTWSGAQFVSERSSVLVFLPGLGEINYMHELLTNMIHKRLQVYPLHSSVTLEEQNNVFLSPVPGYRKIILSTNIAESSVTVPDVKYVIDFCLTRTLVCDEDTNYQSLRLSWASKTSCDQRKGRAGRVSKGYCYRLIPRDFWDSAIPDHVVPEMLRCPLGSTILKVKLLDMGEPRALLATALSPPSLSDIERTILLLKEVGALAVSGQREDENPHDGELTFLGRVLAQLPVSQQLGKLVVLGHVFGCLDECLIIAAALSLKNFFTMPFRQHLDGYRNKVHFSGSSRSDCLALVEAFRAWQACRQRGELRRPKDELDWGRLNYIQIKRIREVAELYEELKNRISQFNMFVGPHHPVLDQEYPYKQRFILQVVLAGAFYPNYFTFGQPDEEMAVRELAGKDPKTTVVLKHIPPYGFLYYKQLQSLFRQCGQVKSIVFDGAKAFVEFSRNPTERFKTLPAVNLAVKMSQLKVSLELSVHAAEEIEGKVQGGSVSKLRNTRVNVDFQKQTVDPMQVSFNTLDRPRTVADLLLTIDVTEVVEVGHFWGYRIDERNAELLKQLTAEINRLELVPLPIHPHPDLVCLAPFTDYNKESYFRAQILYVSGNSAEVFFVDYGNRSHVDLDLLREIPCQFLELPFQALEFKICKMRPSAKSLICGEHWSGGAHGRFAALVGGCPLLVKVFSIVHSVLHVDVYRYSGAQDAVNVRDVLIREGYAELAEESYESKQSYEVLKGFFAKSVDTMPDGSVSSPLKDDEKHLLRILLESFASNRLGAPNCKAVLHGPFNPYELKCHSLTRISKFRCVWIEKESINSVVISDSPADLHQRMLVAASLSVNETGSTMLLRETSLMPHIPGLPALLSMLFAPVMELRVDREGKCYTGVLCGLGWNSATEAPILPEHDIELAFDVRLNVEDIVEINILRAAINKLVCDGPNGSKYLGPERIAQLQENARQKLLGLFCRLKPREKITPQWHEKPYEWNQVDPRLIMEQAEPEGSPGKSTSLYQLHTPVVLSP.

Residues 35 to 82 (EAPREEVQRSEEVPNEDPTAQAQVPVKATAPARPASTSGRSLSQRSSE) form a disordered region. Over residues 36–46 (APREEVQRSEE) the composition is skewed to basic and acidic residues. Low complexity predominate over residues 70–80 (STSGRSLSQRS). In terms of domain architecture, Helicase ATP-binding spans 144–310 (ISLIESNSVV…FAVPVQNKMN (167 aa)). 157 to 164 (GATGSGKS) provides a ligand contact to ATP. The DEAH box motif lies at 256–259 (DEVH). Residues 378–545 (SGAQFVSERS…ILKVKLLDMG (168 aa)) enclose the Helicase C-terminal domain. The 61-residue stretch at 945–1005 (HPHPDLVCLA…REIPCQFLEL (61 aa)) folds into the Tudor domain.

This sequence belongs to the DEAD box helicase family. DEAH subfamily. In terms of assembly, interacts with piRNA-associated proteins PIWIL1 and PIWIL4. As to expression, predominantly expressed in reproductive organs. Detected in mitotic spermatogonia, meiotic spermatocytes (predominantly at the pachytene stage), haploid spermatids in the testis, and in growing oocytes in the ovary (at protein level).

It localises to the cytoplasm. The protein resides in the nucleus. It carries out the reaction ATP + H2O = ADP + phosphate + H(+). Its function is as follows. ATP-binding RNA helicase which plays a central role during spermatogenesis by repressing transposable elements and preventing their mobilization, which is essential for the germline integrity. Acts via the piRNA metabolic process, which mediates the repression of transposable elements during meiosis by forming complexes composed of piRNAs and Piwi proteins and governs the methylation and subsequent repression of transposons. Acts downstream of piRNA biogenesis: exclusively required for transposon silencing in the nucleus, suggesting that it acts as a nuclear effector in the nucleus together with PIWIL4. The chain is ATP-dependent RNA helicase TDRD9 from Mus musculus (Mouse).